Here is a 221-residue protein sequence, read N- to C-terminus: Lysine N-acyltransferase MbtK (221 aa).

The segment at 1–34 is disordered; it reads MSDAPAESAPAQIDPAQTDPAEQPVQILPRERSD. Histidine 141 is a substrate binding site. Catalysis depends on aspartate 179, which acts as the Proton acceptor.

Belongs to the lysine N-acyltransferase MbtK family. As to quaternary structure, monomer.

The protein operates within siderophore biosynthesis; mycobactin biosynthesis. Its function is as follows. Acyltransferase required for the direct transfer of medium- to long-chain fatty acyl moieties from a carrier protein (MbtL) on to the epsilon-amino group of lysine residue in the mycobactin core. The chain is Lysine N-acyltransferase MbtK (mbtK) from Mycolicibacterium paratuberculosis (strain ATCC BAA-968 / K-10) (Mycobacterium paratuberculosis).